A 708-amino-acid chain; its full sequence is B-cell lymphoma 6 protein homolog (708 aa).

Positions 32–99 (TDVVIIVNRE…MYTSRLNLRE (68 aa)) constitute a BTB domain. Positions 303–317 (AKEEERTSSEDEISQ) are enriched in basic and acidic residues. Disordered regions lie at residues 303–371 (AKEE…KSPT) and 431–470 (PTKM…QSPL). Composition is skewed to polar residues over residues 333-370 (SPQS…TKSP) and 431-454 (PTKM…NIVN). 6 consecutive C2H2-type zinc fingers follow at residues 520 to 543 (FFCN…LQVH), 548 to 570 (YKCD…KTVH), 576 to 598 (YRCN…TRIH), 604 to 626 (YKCE…VLIH), 632 to 654 (YPCE…LRIH), and 660 to 683 (YHCE…RQKH).

The protein localises to the nucleus. Functionally, transcriptional repressor mainly required for germinal center (GC) formation and antibody affinity maturation which has different mechanisms of action specific to the lineage and biological functions. Forms complexes with different corepressors and histone deacetylases to repress the transcriptional expression of different subsets of target genes. Represses its target genes by binding directly to the DNA sequence 5'-TTCCTAGAA-3' (BCL6-binding site) or indirectly by repressing the transcriptional activity of transcription factors. In GC B-cells, represses genes that function in differentiation, inflammation, apoptosis and cell cycle control, also autoregulates its transcriptional expression and up-regulates, indirectly, the expression of some genes important for GC reactions, such as AICDA, through the repression of microRNAs expression. An important function is to allow GC B-cells to proliferate very rapidly in response to T-cell dependent antigens and tolerate the physiological DNA breaks required for immunglobulin class switch recombination and somatic hypermutation without inducing a p53/TP53-dependent apoptotic response. In follicular helper CD4(+) T-cells (T(FH) cells), promotes the expression of T(FH)-related genes but inhibits the differentiation of T(H)1, T(H)2 and T(H)17 cells. Also required for the establishment and maintenance of immunological memory for both T- and B-cells. Suppresses macrophage proliferation through competition with STAT5 for STAT-binding motifs binding on certain target genes, such as CCL2 and CCND2. In response to genotoxic stress, controls cell cycle arrest in GC B-cells in both p53/TP53-dependedent and -independent manners. Besides, also controls neurogenesis through the alteration of the composition of NOTCH-dependent transcriptional complexes at selective NOTCH targets, such as HES5, including the recruitment of the deacetylase SIRT1 and resulting in an epigenetic silencing leading to neuronal differentiation. This Gallus gallus (Chicken) protein is B-cell lymphoma 6 protein homolog.